Reading from the N-terminus, the 150-residue chain is Protein Smg homolog (150 aa).

The protein belongs to the Smg family.

In Methylibium petroleiphilum (strain ATCC BAA-1232 / LMG 22953 / PM1), this protein is Protein Smg homolog.